A 71-amino-acid chain; its full sequence is uncharacterized protein (71 aa).

Residues 12 to 34 (GYLSLTLVTLPVCSSLHCYFLWT) traverse the membrane as a helical segment.

Its subcellular location is the membrane. This is an uncharacterized protein from Dictyostelium discoideum (Social amoeba).